A 312-amino-acid chain; its full sequence is Pyrimidine-specific ribonucleoside hydrolase RihA (312 aa).

Residue H240 is part of the active site.

This sequence belongs to the IUNH family. RihA subfamily.

Hydrolyzes cytidine or uridine to ribose and cytosine or uracil, respectively. The polypeptide is Pyrimidine-specific ribonucleoside hydrolase RihA (Citrobacter koseri (strain ATCC BAA-895 / CDC 4225-83 / SGSC4696)).